The following is an 85-amino-acid chain: Phosphocarrier protein HPr (85 aa).

One can recognise an HPr domain in the interval 1-85 (MFQNQVKITA…HLSLIMTELE (85 aa)). The active-site Pros-phosphohistidine intermediate is histidine 15.

The protein belongs to the HPr family.

Its subcellular location is the cytoplasm. Its function is as follows. General (non sugar-specific) component of the phosphoenolpyruvate-dependent sugar phosphotransferase system (sugar PTS). This major carbohydrate active-transport system catalyzes the phosphorylation of incoming sugar substrates concomitantly with their translocation across the cell membrane. The phosphoryl group from phosphoenolpyruvate (PEP) is transferred to the phosphoryl carrier protein HPr by enzyme I. Phospho-HPr then transfers it to the PTS EIIA domain. This Buchnera aphidicola subsp. Acyrthosiphon pisum (strain APS) (Acyrthosiphon pisum symbiotic bacterium) protein is Phosphocarrier protein HPr (ptsH).